Reading from the N-terminus, the 145-residue chain is MWKLCLRLLAVLAVCLSTATQAQSDLFLLSPKRSGAPQPVARYCGEKLSNALKLVCRGNYNTMFKKASQDVSDSESEDNYWSGQSADEAAEAAAAALPPYPILARPSAGGLLTGAVFRRRTRGVFDECCRKSCSISELQTYCGRR.

Positions 1 to 19 (MWKLCLRLLAVLAVCLSTA) form a signal peptide, or 22. Propeptides lie at residues 20–33 (TQAQ…SPKR) and 117–122 (FRRRTR). 3 cysteine pairs are disulfide-bonded: cysteine 44–cysteine 129, cysteine 56–cysteine 142, and cysteine 128–cysteine 133.

It belongs to the insulin family. In terms of assembly, heterodimer of a B chain and an A chain linked by two disulfide bonds.

The protein localises to the secreted. The chain is LIRP from Locusta migratoria (Migratory locust).